A 98-amino-acid chain; its full sequence is Cell division protein FtsB (98 aa).

Residues 1–3 (MKR) are Cytoplasmic-facing. Residues 4–21 (LLFVLIALLAMLQYRLWL) traverse the membrane as a helical segment. The Periplasmic portion of the chain corresponds to 22 to 98 (GDKSLADSFH…GGERGGVPEN (77 aa)). A coiled-coil region spans residues 31–74 (HLQEQIKLQQQSNAQLVARNQVLREEISDLRSGTEALEERARNE).

This sequence belongs to the FtsB family. As to quaternary structure, part of a complex composed of FtsB, FtsL and FtsQ.

Its subcellular location is the cell inner membrane. Its function is as follows. Essential cell division protein. May link together the upstream cell division proteins, which are predominantly cytoplasmic, with the downstream cell division proteins, which are predominantly periplasmic. The sequence is that of Cell division protein FtsB from Shewanella pealeana (strain ATCC 700345 / ANG-SQ1).